The chain runs to 190 residues: Adenine phosphoribosyltransferase (190 aa).

The protein belongs to the purine/pyrimidine phosphoribosyltransferase family. Homodimer.

The protein localises to the cytoplasm. It carries out the reaction AMP + diphosphate = 5-phospho-alpha-D-ribose 1-diphosphate + adenine. It participates in purine metabolism; AMP biosynthesis via salvage pathway; AMP from adenine: step 1/1. Its function is as follows. Catalyzes a salvage reaction resulting in the formation of AMP, that is energically less costly than de novo synthesis. This is Adenine phosphoribosyltransferase from Cupriavidus necator (strain ATCC 17699 / DSM 428 / KCTC 22496 / NCIMB 10442 / H16 / Stanier 337) (Ralstonia eutropha).